Here is a 134-residue protein sequence, read N- to C-terminus: UPF0102 protein Dshi_2830 (134 aa).

It belongs to the UPF0102 family.

The polypeptide is UPF0102 protein Dshi_2830 (Dinoroseobacter shibae (strain DSM 16493 / NCIMB 14021 / DFL 12)).